The primary structure comprises 351 residues: N-acetyl-gamma-glutamyl-phosphate reductase (351 aa).

Cys-154 is an active-site residue.

The protein belongs to the NAGSA dehydrogenase family. Type 1 subfamily.

It localises to the cytoplasm. It carries out the reaction N-acetyl-L-glutamate 5-semialdehyde + phosphate + NADP(+) = N-acetyl-L-glutamyl 5-phosphate + NADPH + H(+). It participates in amino-acid biosynthesis; L-arginine biosynthesis; N(2)-acetyl-L-ornithine from L-glutamate: step 3/4. Its function is as follows. Catalyzes the NADPH-dependent reduction of N-acetyl-5-glutamyl phosphate to yield N-acetyl-L-glutamate 5-semialdehyde. The protein is N-acetyl-gamma-glutamyl-phosphate reductase of Prochlorococcus marinus subsp. pastoris (strain CCMP1986 / NIES-2087 / MED4).